The chain runs to 729 residues: Transketolase (729 aa).

His-97 serves as a coordination point for substrate. Thiamine diphosphate is bound by residues His-138 and 186-188 (GPL). Asp-227 contributes to the Mg(2+) binding site. Positions 228 and 257 each coordinate thiamine diphosphate. Positions 257 and 259 each coordinate Mg(2+). The substrate site is built by His-332, Arg-423, and Ser-450. His-332 contacts thiamine diphosphate. Residue Glu-477 is the Proton donor of the active site. Phe-503 is a binding site for thiamine diphosphate. His-527, Asp-535, and Arg-586 together coordinate substrate.

The protein belongs to the transketolase family. As to quaternary structure, homodimer. It depends on Mg(2+) as a cofactor. Ca(2+) is required as a cofactor. The cofactor is Mn(2+). Co(2+) serves as cofactor. Requires thiamine diphosphate as cofactor.

It carries out the reaction D-sedoheptulose 7-phosphate + D-glyceraldehyde 3-phosphate = aldehydo-D-ribose 5-phosphate + D-xylulose 5-phosphate. In terms of biological role, catalyzes the transfer of a two-carbon ketol group from a ketose donor to an aldose acceptor, via a covalent intermediate with the cofactor thiamine pyrophosphate. This is Transketolase from Streptococcus pyogenes serotype M6 (strain ATCC BAA-946 / MGAS10394).